The chain runs to 396 residues: Putative protein IntB (396 aa).

The Core-binding (CB) domain occupies 71–151 (RTFKEVAIEW…RTTAIMRYAV (81 aa)). In terms of domain architecture, Tyr recombinase spans 174–367 (QHRPALELKR…EHLEERRLML (194 aa)). Catalysis depends on residues R213, K252, H316, R319, and H343. The active-site O-(3'-phospho-DNA)-tyrosine intermediate is Y353.

The protein belongs to the 'phage' integrase family.

The sequence is that of Putative protein IntB (intB) from Escherichia coli (strain K12).